We begin with the raw amino-acid sequence, 722 residues long: Polyribonucleotide nucleotidyltransferase (722 aa).

2 residues coordinate Mg(2+): D498 and D504. In terms of domain architecture, KH spans 565–624; that stretch reads PQFHTMKIDPDKIRDIIGKGGATIRSITEETGASIDIDDNGTIKIYADDGDGMQAAIARI. The S1 motif domain occupies 634-702; that stretch reads GAVYQGKVVR…QRGRIKLSIK (69 aa).

Belongs to the polyribonucleotide nucleotidyltransferase family. Component of the RNA degradosome, which is a multiprotein complex involved in RNA processing and mRNA degradation. It depends on Mg(2+) as a cofactor.

The protein localises to the cytoplasm. The catalysed reaction is RNA(n+1) + phosphate = RNA(n) + a ribonucleoside 5'-diphosphate. Functionally, involved in mRNA degradation. Catalyzes the phosphorolysis of single-stranded polyribonucleotides processively in the 3'- to 5'-direction. This chain is Polyribonucleotide nucleotidyltransferase, found in Saccharophagus degradans (strain 2-40 / ATCC 43961 / DSM 17024).